We begin with the raw amino-acid sequence, 413 residues long: MDPEAKVSSSRRRDLPPIPQGQRRTPRALPSMPSQDTAEEMPAPKSRKKKAKRDAESVDEPDDGGMEMGGLASRRQSECPEPLTPEPLDNPPQRRKKKKKAQAIDAEGDQTDLVSNGDTLDQNTDEEVTRKPKKRKVKPKVTETQSNNELDVEDDDVITDPQSPIPQHSLFSAPQGPSQPVGKVFVEKSRRFQAADRVEQWKPSGPIEQSIMDIRSMWTTRDVSMRVHSGFRVIGLFSHGFLAGYAVWNIIVVYVLAGDQMSSLSNLLQQFHTLAYPAQSLLYLLLALSTVSAFDRVNLAKAPAAMRSLLRLSPVALASVFYFSALVLSLSQQMTSDRINLYKYSSYNTTLWPPGSESSILYPWITVNLVVSLLVGLAWILMSTSPDIDNTEAFLMSMEMEYPNSEEKGNVTA.

Positions 1-162 (MDPEAKVSSS…EDDDVITDPQ (162 aa)) are disordered. Polar residues predominate over residues 112–122 (DLVSNGDTLDQ). The next 4 membrane-spanning stretches (helical) occupy residues 233 to 253 (VIGL…IIVV), 274 to 294 (LAYP…VSAF), 312 to 332 (LSPV…SLSQ), and 360 to 380 (ILYP…LAWI).

Belongs to the TMEM237 family.

It localises to the membrane. The protein resides in the cell projection. The protein localises to the cilium. Component of the transition zone in primary cilia. Required for ciliogenesis. This Danio rerio (Zebrafish) protein is Transmembrane protein 237B (tmem237b).